A 208-amino-acid polypeptide reads, in one-letter code: Guanylate kinase (208 aa).

One can recognise a Guanylate kinase-like domain in the interval 4–185 (GNLYILSAPS…ALADLVHILR (182 aa)). 11 to 18 (APSGAGKS) is a binding site for ATP.

The protein belongs to the guanylate kinase family.

It localises to the cytoplasm. The enzyme catalyses GMP + ATP = GDP + ADP. Essential for recycling GMP and indirectly, cGMP. The sequence is that of Guanylate kinase from Mannheimia succiniciproducens (strain KCTC 0769BP / MBEL55E).